The sequence spans 557 residues: Trigger factor (557 aa).

The region spanning 169-255 is the PPIase FKBP-type domain; that stretch reads GDVVVIDFQA…LKEIKTKELP (87 aa). The tract at residues 438-557 is disordered; sequence WVDSEGNPTE…KAGKKSKKDK (120 aa). Positions 455–466 are enriched in basic and acidic residues; sequence SEGEDRQERSES.

The protein belongs to the FKBP-type PPIase family. Tig subfamily.

The protein localises to the cytoplasm. It carries out the reaction [protein]-peptidylproline (omega=180) = [protein]-peptidylproline (omega=0). Functionally, involved in protein export. Acts as a chaperone by maintaining the newly synthesized protein in an open conformation. Functions as a peptidyl-prolyl cis-trans isomerase. The chain is Trigger factor from Synechococcus sp. (strain JA-3-3Ab) (Cyanobacteria bacterium Yellowstone A-Prime).